We begin with the raw amino-acid sequence, 559 residues long: Potassium-transporting ATPase potassium-binding subunit (559 aa).

13 consecutive transmembrane segments (helical) span residues 5 to 25 (GFLL…PLGS), 27 to 47 (LARL…RILW), 63 to 83 (LLAL…LLFW), 132 to 152 (GLTV…FALI), 170 to 190 (LVRI…LFFI), 253 to 273 (LAQM…FGEA), 283 to 303 (LLWA…WAEV), 327 to 347 (FGVL…CGAV), 356 to 376 (ALGG…FGGV), 379 to 399 (GLYG…LMIG), 416 to 436 (MTAL…ALAM), 484 to 504 (LLAF…MAIA), and 524 to 544 (GALF…LTFI).

It belongs to the KdpA family. As to quaternary structure, the system is composed of three essential subunits: KdpA, KdpB and KdpC.

It localises to the cell inner membrane. In terms of biological role, part of the high-affinity ATP-driven potassium transport (or Kdp) system, which catalyzes the hydrolysis of ATP coupled with the electrogenic transport of potassium into the cytoplasm. This subunit binds the periplasmic potassium ions and delivers the ions to the membrane domain of KdpB through an intramembrane tunnel. The polypeptide is Potassium-transporting ATPase potassium-binding subunit (Salmonella newport (strain SL254)).